The primary structure comprises 176 residues: ATP-dependent protease subunit HslV (176 aa).

The active site involves threonine 5. Na(+)-binding residues include serine 161, cysteine 164, and threonine 167.

Belongs to the peptidase T1B family. HslV subfamily. A double ring-shaped homohexamer of HslV is capped on each side by a ring-shaped HslU homohexamer. The assembly of the HslU/HslV complex is dependent on binding of ATP.

Its subcellular location is the cytoplasm. The catalysed reaction is ATP-dependent cleavage of peptide bonds with broad specificity.. Its activity is regulated as follows. Allosterically activated by HslU binding. In terms of biological role, protease subunit of a proteasome-like degradation complex believed to be a general protein degrading machinery. The sequence is that of ATP-dependent protease subunit HslV from Desulfitobacterium hafniense (strain Y51).